Here is a 291-residue protein sequence, read N- to C-terminus: Quinol oxidase subunit 2 (291 aa).

The signal sequence occupies residues 1 to 28; that stretch reads MQLKKAFWKLASLLPLSLLLFLGGCDKK. Helical transmembrane passes span 49–69 and 91–111; these read SFLL…VILI and LEII…IPTV.

This sequence belongs to the cytochrome c oxidase subunit 2 family.

Its subcellular location is the cell membrane. It catalyses the reaction 2 a quinol + O2 = 2 a quinone + 2 H2O. Its function is as follows. Catalyzes quinol oxidation with the concomitant reduction of oxygen to water. Subunit II transfers the electrons from a quinol to the binuclear center of the catalytic subunit I. The sequence is that of Quinol oxidase subunit 2 from Bacillus cereus (strain ATCC 14579 / DSM 31 / CCUG 7414 / JCM 2152 / NBRC 15305 / NCIMB 9373 / NCTC 2599 / NRRL B-3711).